A 708-amino-acid polypeptide reads, in one-letter code: Solute carrier family 15 member 1 (708 aa).

The chain crosses the membrane as a helical span at residues 1-21 (MGMSKSYGCFGYPLSIFFIVV). Residues 22-53 (NEFCERFSYYGMRALLILYFRRFIGWDDNLST) are Extracellular-facing. A glycan (N-linked (GlcNAc...) asparagine) is linked at asparagine 50. A helical transmembrane segment spans residues 54-74 (AIYHTFVALCYLTPILGALIA). The Cytoplasmic portion of the chain corresponds to 75–82 (DSWLGKFK). Residues 83-103 (TIVSLSIVYTIGQAVTAVSSI) traverse the membrane as a helical segment. The Extracellular portion of the chain corresponds to 104 to 118 (NDLTDYNKDGTPDNL). The N-linked (GlcNAc...) asparagine glycan is linked to asparagine 117. Residues 119 to 139 (SVHVALSMIGLALIALGTGGI) form a helical membrane-spanning segment. Residues 140-161 (KPCVSAFGGDQFEEGQEKQRNR) lie on the Cytoplasmic side of the membrane. A helical membrane pass occupies residues 162-182 (FFSIFYLAINAGSLISTIVTP). At 183–198 (MLRVHECGIYSQKACY) the chain is on the extracellular side. Residues 199-219 (PLAFGVPAALMAVSLIVFVIG) form a helical membrane-spanning segment. Topologically, residues 220–276 (SGMYKKFQPQGNVMGKVVKCIGFALKNRFRHRSKQFPKREHWLDWAKEKYDERLISQ) are cytoplasmic. A helical transmembrane segment spans residues 277 to 297 (IKMVTKVMFLYIPLPMFWALF). Residues 298–327 (DQQGSRWTLQATAMSGKIGLLEVQPDQMQT) lie on the Extracellular side of the membrane. The helical transmembrane segment at 328–348 (VNAILIVVMVPIMDAVVYPLI) threads the bilayer. The Cytoplasmic segment spans residues 349 to 361 (AKCGFNFTSLKRM). A helical membrane pass occupies residues 362-382 (TVGMFLASMAFVMAAIVQLEI). Residues 383–584 (DKTLPVFPKQ…ISPNTVNMAL (202 aa)) lie on the Extracellular side of the membrane. An extracellular domain (ECD) region spans residues 383–585 (DKTLPVFPKQ…SPNTVNMALQ (203 aa)). 8 N-linked (GlcNAc...) asparagine glycosylation sites follow: asparagine 408, asparagine 439, asparagine 495, asparagine 499, asparagine 509, asparagine 514, asparagine 527, and asparagine 539. Residues 585–605 (QIPQYFLITCGEVVFSVTGLE) form a helical membrane-spanning segment. Over 606–619 (FSYSQAPSNMKSVL) the chain is Cytoplasmic. A helical membrane pass occupies residues 620–640 (QAGWLLTVAVGNIIVLIVAGA). Topologically, residues 641–645 (GQFSE) are extracellular. A helical membrane pass occupies residues 646–666 (QWAEYILFAALLLVVCVIFAI). Topologically, residues 667–708 (MARFYTYVNPAEIEAQFDDDEKKNLEKMNVYSTVTPVSQTQM) are cytoplasmic.

This sequence belongs to the major facilitator superfamily. Proton-dependent oligopeptide transporter (POT/PTR) (TC 2.A.17) family. In terms of assembly, interacts (via extracellular domain region) with trypsin.

It localises to the apical cell membrane. It catalyses the reaction a dipeptide(out) + H(+)(out) = a dipeptide(in) + H(+)(in). The enzyme catalyses an L-amino acid tripeptide(out) + H(+)(out) = an L-amino acid tripeptide(in) + H(+)(in). The catalysed reaction is L-alanyl-L-lysine(out) + H(+)(out) = L-alanyl-L-lysine(in) + H(+)(in). It carries out the reaction L-alanyl-L-proline(out) + H(+)(out) = L-alanyl-L-proline(in) + H(+)(in). It catalyses the reaction L-alanyl-L-valine(out) + H(+)(out) = L-alanyl-L-valine(in) + H(+)(in). The enzyme catalyses carnosine(out) + H(+)(out) = carnosine(in) + H(+)(in). The catalysed reaction is glycyl-L-glutamine(out) + H(+)(out) = glycyl-L-glutamine(in) + H(+)(in). It carries out the reaction glycyl-L-leucine(out) + H(+)(out) = glycyl-L-leucine(in) + H(+)(in). It catalyses the reaction glycyl-L-proline(out) + H(+)(out) = glycyl-L-proline(in) + H(+)(in). The enzyme catalyses glycyl-sarcosine(out) + H(+)(out) = glycyl-sarcosine(in) + H(+)(in). The catalysed reaction is L-leucyl-L-leucine(out) + H(+)(out) = L-leucyl-L-leucine(in) + H(+)(in). It carries out the reaction L-leucyl-L-proline(out) + H(+)(out) = L-leucyl-L-proline(in) + H(+)(in). It catalyses the reaction L-phenylalanyl-L-leucine(out) + H(+)(out) = L-phenylalanyl-L-leucine(in) + H(+)(in). The enzyme catalyses L-phenylalanyl-L-phenylalanine(out) + H(+)(out) = L-phenylalanyl-L-phenylalanine(in) + H(+)(in). The catalysed reaction is L-lysyl-glycine(out) + H(+)(out) = L-lysyl-glycine(in) + H(+)(in). It carries out the reaction L-tyrosylglycine(out) + H(+)(out) = L-tyrosylglycine(in) + H(+)(in). It catalyses the reaction L-alanyl-L-aspartate(out) + 2 H(+)(out) = L-alanyl-L-aspartate(in) + 2 H(+)(in). The enzyme catalyses L-aspartyl-glycine(out) + 2 H(+)(out) = L-aspartyl-glycine(in) + 2 H(+)(in). The catalysed reaction is glycyl-L-aspartate(out) + 2 H(+)(out) = glycyl-L-aspartate(in) + 2 H(+)(in). It carries out the reaction glycyl-L-glutamate(out) + 2 H(+)(out) = glycyl-L-glutamate(in) + 2 H(+)(in). It catalyses the reaction L-alanyl-L-leucyl-L-alanine(out) + H(+)(out) = L-alanyl-L-leucyl-L-alanine(in) + H(+)(in). The enzyme catalyses L-alanyl-L-prolylglycine(out) + H(+)(out) = L-alanyl-L-prolylglycine(in) + H(+)(in). The catalysed reaction is glycylglycyl-L-isoleucine(out) + H(+)(out) = glycylglycyl-L-isoleucine(in) + H(+)(in). It carries out the reaction glycylglycyl-L-proline(out) + H(+)(out) = glycylglycyl-L-proline(in) + H(+)(in). It catalyses the reaction L-methionyl-L-phenylalanyl-L-methionine(out) + H(+)(out) = L-methionyl-L-phenylalanyl-L-methionine(in) + H(+)(in). The enzyme catalyses N-acetyl-D-muramoyl-L-alanyl-D-isoglutamine(out) + 2 H(+)(out) = N-acetyl-D-muramoyl-L-alanyl-D-isoglutamine(in) + 2 H(+)(in). The catalysed reaction is N(alpha)-formyl-L-methionyl-L-leucyl-L-phenylalanine(out) + 2 H(+)(out) = N(alpha)-formyl-L-methionyl-L-leucyl-L-phenylalanine(in) + 2 H(+)(in). Electrogenic proton-coupled amino-acid transporter that transports oligopeptides of 2 to 4 amino acids with a preference for dipeptides. Transports neutral and monovalently charged peptides with a proton to peptide stoichiometry of 1:1 or 2:1. Primarily responsible for the absorption of dietary di- and tripeptides from the small intestinal lumen. Mediates transepithelial transport of muramyl and N-formylated bacterial dipeptides contributing to recognition of pathogenic bacteria by the mucosal immune system. The sequence is that of Solute carrier family 15 member 1 (SLC15A1) from Canis lupus familiaris (Dog).